The sequence spans 545 residues: Chaperonin GroEL (545 aa).

Residues 30-33 (TMGP), K51, 87-91 (DGTTT), G416, 479-481 (NAA), and D495 each bind ATP.

It belongs to the chaperonin (HSP60) family. In terms of assembly, forms a cylinder of 14 subunits composed of two heptameric rings stacked back-to-back. Interacts with the co-chaperonin GroES.

It is found in the cytoplasm. It catalyses the reaction ATP + H2O + a folded polypeptide = ADP + phosphate + an unfolded polypeptide.. Functionally, together with its co-chaperonin GroES, plays an essential role in assisting protein folding. The GroEL-GroES system forms a nano-cage that allows encapsulation of the non-native substrate proteins and provides a physical environment optimized to promote and accelerate protein folding. The polypeptide is Chaperonin GroEL (Nautilia profundicola (strain ATCC BAA-1463 / DSM 18972 / AmH)).